The primary structure comprises 375 residues: Protein abhd-3.2 (375 aa).

The AB hydrolase-1 domain maps to 108 to 203 (PIVVFLPGIT…ILWNYLAMTG (96 aa)). Active-site charge relay system residues include Ser189, Asp315, and His344.

It belongs to the AB hydrolase superfamily. AB hydrolase 4 family.

This chain is Protein abhd-3.2, found in Caenorhabditis elegans.